We begin with the raw amino-acid sequence, 138 residues long: Small ribosomal subunit protein uS11 (138 aa).

Residues 1 to 12 (MAKQSAKGSTTT) are compositionally biased toward polar residues. A disordered region spans residues 1 to 37 (MAKQSAKGSTTTKRQRGKRREKKNVPRGQAHIQSTFN). A compositionally biased stretch (basic residues) spans 13–22 (KRQRGKRREK).

It belongs to the universal ribosomal protein uS11 family. As to quaternary structure, part of the 30S ribosomal subunit. Interacts with proteins S7 and S18. Binds to IF-3.

Functionally, located on the platform of the 30S subunit, it bridges several disparate RNA helices of the 16S rRNA. Forms part of the Shine-Dalgarno cleft in the 70S ribosome. This Roseiflexus castenholzii (strain DSM 13941 / HLO8) protein is Small ribosomal subunit protein uS11.